The primary structure comprises 145 residues: 3-dehydroquinate dehydratase 2 (145 aa).

Tyr22 functions as the Proton acceptor in the catalytic mechanism. Positions 73, 79, and 86 each coordinate substrate. The active-site Proton donor is His101. Substrate contacts are provided by residues 102 to 103 (IS) and Arg112.

Belongs to the type-II 3-dehydroquinase family. Homododecamer.

The catalysed reaction is 3-dehydroquinate = 3-dehydroshikimate + H2O. Its pathway is metabolic intermediate biosynthesis; chorismate biosynthesis; chorismate from D-erythrose 4-phosphate and phosphoenolpyruvate: step 3/7. Functionally, catalyzes a trans-dehydration via an enolate intermediate. This chain is 3-dehydroquinate dehydratase 2 (aroQ2), found in Corynebacterium efficiens (strain DSM 44549 / YS-314 / AJ 12310 / JCM 11189 / NBRC 100395).